Consider the following 92-residue polypeptide: Dynein light chain 1, cytoplasmic (92 aa).

This sequence belongs to the dynein light chain family. In terms of assembly, homodimer. Cytoplasmic dynein consists of two catalytic heavy chains (HCs) and a number of non-catalytic subunits which present intermediate chains (ICs), light intermediate chains (LICs) and light chains (LCs). Component of the nuclear pore complex (NPC). NPC constitutes the exclusive means of nucleocytoplasmic transport. NPCs allow the passive diffusion of ions and small molecules and the active, nuclear transport receptor-mediated bidirectional transport of macromolecules such as proteins, RNAs, ribonucleoparticles (RNPs), and ribosomal subunits across the nuclear envelope. Due to its 8-fold rotational symmetry, all subunits are present with 8 copies or multiples thereof. Part of the NUP82 subcomplex. In the complex, interacts directly with Nup159.

Its subcellular location is the cytoplasm. It is found in the cytoskeleton. The protein localises to the nucleus. The protein resides in the nuclear pore complex. Its function is as follows. Acts as one of several non-catalytic accessory components of the cytoplasmic dynein complex that are thought to be involved in linking dynein to cargos and to adapter proteins that regulate dynein function. Cytoplasmic dynein 1 acts as a motor for the intracellular retrograde motility of vesicles and organelles along microtubules. May play a role in changing or maintaining the spatial distribution of cytoskeletal structures. Also a component of the nuclear pore complex where it may contribute to the stable association of the Nup82 subcomplex with the NPC. The polypeptide is Dynein light chain 1, cytoplasmic (DYN2) (Saccharomyces cerevisiae (strain ATCC 204508 / S288c) (Baker's yeast)).